A 487-amino-acid chain; its full sequence is b(0,+)-type amino acid transporter 1 (487 aa).

A compositionally biased stretch (basic and acidic residues) spans 1-15; the sequence is MGDTGLRKRREDEKS. The disordered stretch occupies residues 1-22; sequence MGDTGLRKRREDEKSIQSQEPK. The Cytoplasmic portion of the chain corresponds to 1-31; the sequence is MGDTGLRKRREDEKSIQSQEPKTTSLQKELG. Serine 18 bears the Phosphoserine mark. The helical transmembrane segment at 32–55 threads the bilayer; the sequence is LISGISIIVGTIIGSGIFVSPKSV. 43-47 contacts L-arginine; sequence IIGSG. The Extracellular segment spans residues 56 to 62; that stretch reads LSNTEAV. A helical transmembrane segment spans residues 63-84; it reads GPCLIIWAACGVLATLGALCFA. Residues 85–110 lie on the Cytoplasmic side of the membrane; sequence ELGTMITKSGGEYPYLMEAYGPIPAY. A helical transmembrane segment spans residues 111–137; it reads LFSWASLIVIKPTSFAIICLSFSEYVC. At 138-147 the chain is on the extracellular side; that stretch reads APFYVGCKPP. 2 helical membrane passes run 148–169 and 170–193; these read QIVVKCLAAAAILFISTVNSLS and VRLGSYVQNIFTAAKLVIVAIIII. The Extracellular segment spans residues 194-217; that stretch reads SGLVLLAQGNTKNFDNSFEGAQLS. The chain crosses the membrane as a helical span at residues 218–238; it reads VGAISLAFYNGLWAYDGWNQL. L-arginine is bound at residue aspartate 233. Over 239–251 the chain is Cytoplasmic; sequence NYITEELRNPYRN. The chain crosses the membrane as a helical span at residues 252–274; it reads LPLAIIIGIPLVTACYILMNVSY. Over 275–302 the chain is Extracellular; sequence FTVMTATELLQSQAVAVTFGDRVLYPAS. A helical transmembrane segment spans residues 303-325; sequence WIVPLFVAFSTIGAANGTCFTAG. The Cytoplasmic portion of the chain corresponds to 326–351; it reads RLIYVAGREGHMLKVLSYISVRRLTP. The next 2 helical transmembrane spans lie at 352 to 370 and 371 to 391; these read APAIIFYGIIATIYIIPGD and INSLVNYFSFAAWLFYGLTIL. Residues 392–410 lie on the Cytoplasmic side of the membrane; that stretch reads GLIVMRFTRKELERPIKVP. Residues 411-431 form a helical membrane-spanning segment; the sequence is VVIPVLMTLISVFLVLAPIIS. The Extracellular segment spans residues 432 to 434; that stretch reads KPT. Residues 435 to 450 traverse the membrane as a helical segment; sequence WEYLYCVLFILSGLLF. At 451 to 487 the chain is on the cytoplasmic side; that stretch reads YFLFVHYKFGWAQKISKPITMHLQMLMEVVPPEEDPE.

Belongs to the amino acid-polyamine-organocation (APC) superfamily. As to quaternary structure, disulfide-linked heterodimer composed of the catalytic light chain subunit SLC7A9 and the heavy chain subunit SLC3A1. The heterodimer is the minimal functional unit. Assembles in heterotetramers (dimers of heterodimers) and higher order oligomers; the oligomerization is mediated by SLC3A1 likely to prevent degradation and facilitate heteromer trafficking to the plasma membrane. Interacts with CAV1. In terms of tissue distribution, expressed in the brush border membrane in the kidney (at protein level). Kidney, small intestine, liver and placenta.

Its subcellular location is the apical cell membrane. It is found in the cell membrane. The enzyme catalyses L-leucine(out) + L-arginine(in) = L-leucine(in) + L-arginine(out). It catalyses the reaction L-histidine(out) + L-arginine(in) = L-histidine(in) + L-arginine(out). The catalysed reaction is L-arginine(in) + L-phenylalanine(out) = L-arginine(out) + L-phenylalanine(in). It carries out the reaction L-cysteine(out) + L-arginine(in) = L-cysteine(in) + L-arginine(out). The enzyme catalyses L-cystine(out) + L-arginine(in) = L-cystine(in) + L-arginine(out). It catalyses the reaction L-lysine(out) + L-arginine(in) = L-lysine(in) + L-arginine(out). Its function is as follows. Associates with SLC3A1 to form a functional transporter complex that mediates the electrogenic exchange between cationic amino acids and neutral amino acids, with a stoichiometry of 1:1. Has system b(0,+)-like activity with high affinity for extracellular cationic amino acids and L-cystine and lower affinity for intracellular neutral amino acids. Substrate exchange is driven by high concentration of intracellular neutral amino acids and the intracellular reduction of L-cystine to L-cysteine. Required for reabsorption of L-cystine and dibasic amino acids across the brush border membrane in renal proximal tubules. The sequence is that of b(0,+)-type amino acid transporter 1 from Homo sapiens (Human).